The chain runs to 570 residues: PTS system lactose-specific EIICB component (570 aa).

The PTS EIIC type-3 domain maps to 9-410; sequence IEKGKPFFEK…VVDIIIYYPF (402 aa). 9 helical membrane passes run 31–51, 65–85, 104–124, 133–153, 178–198, 223–243, 283–303, 340–360, and 382–402; these read GFIS…IAYV, AILM…VAGT, INFI…ASDP, AFMG…TVIV, FKDL…DLVI, GWIG…VGIH, MFIV…MFMW, VFFI…KLFV, and IIMG…LIVV. Residues 467 to 570 enclose the PTS EIIB type-3 domain; it reads QTNVLVLCAG…LDFVQQQFEN (104 aa). Cysteine 474 functions as the Phosphocysteine intermediate; for EIIB activity in the catalytic mechanism. Cysteine 474 carries the post-translational modification Phosphocysteine; by EIIA.

The protein resides in the cell membrane. The enzyme catalyses lactose(out) + N(pros)-phospho-L-histidyl-[protein] = lactose 6-phosphate(in) + L-histidyl-[protein]. Its function is as follows. The phosphoenolpyruvate-dependent sugar phosphotransferase system (sugar PTS), a major carbohydrate active transport system, catalyzes the phosphorylation of incoming sugar substrates concomitantly with their translocation across the cell membrane. The enzyme II LacEF PTS system is involved in lactose transport, but can also use galactose, isopropyl beta-thio-galactopyranoside and thiomethyl beta-D-galactopyranoside (TMG) as substrates. The protein is PTS system lactose-specific EIICB component of Staphylococcus aureus.